We begin with the raw amino-acid sequence, 331 residues long: Pseudouridylate synthase TRUB2, mitochondrial (331 aa).

The transit peptide at 1–10 (MGSAGLSRLH) directs the protein to the mitochondrion. Asp-98 (nucleophile) is an active-site residue. A disordered region spans residues 296 to 331 (KSLSPGLDTKQLPSPGWSWDSQGPSSTLGLERGAGQ). Over residues 314–323 (WDSQGPSSTL) the composition is skewed to polar residues.

Belongs to the pseudouridine synthase TruB family. In terms of assembly, forms a regulatory protein-RNA complex, consisting of RCC1L, NGRN, RPUSD3, RPUSD4, TRUB2, FASTKD2 and 16S mt-rRNA.

The protein localises to the mitochondrion matrix. It carries out the reaction a uridine in mRNA = a pseudouridine in mRNA. The catalysed reaction is uridine(55) in tRNA = pseudouridine(55) in tRNA. Minor enzyme contributing to the isomerization of uridine to pseudouridine (pseudouridylation) of specific mitochondrial mRNAs (mt-mRNAs) such as COXI and COXIII mt-mRNAs. As a component of a functional protein-RNA module, consisting of RCC1L, NGRN, RPUSD3, RPUSD4, TRUB2, FASTKD2 and 16S mitochondrial ribosomal RNA (16S mt-rRNA), controls 16S mt-rRNA abundance and is required for intra-mitochondrial translation. Also catalyzes pseudouridylation of some tRNAs, including synthesis of pseudouridine(55) from uracil-55, in the psi GC loop of a subset of tRNAs. The polypeptide is Pseudouridylate synthase TRUB2, mitochondrial (Homo sapiens (Human)).